The primary structure comprises 958 residues: Translation initiation factor IF-2 (958 aa).

Disordered stretches follow at residues 67-95 (APAASRPAAPAPGPAAPKAPAPAPAAPAP) and 111-355 (PAPA…VPRG). Over residues 75 to 95 (APAPGPAAPKAPAPAPAAPAP) the composition is skewed to pro residues. Positions 140–161 (PAPARQGGQAPRPGGPRPGNNP) are enriched in low complexity. Residues 195–206 (RGERRNDGERPG) show a composition bias toward basic and acidic residues. Residues 209 to 221 (RPAAGAGGPRPAA) show a composition bias toward low complexity. The span at 228-241 (PGAPRPGAPRPGAP) shows a compositional bias: pro residues. A compositionally biased stretch (gly residues) spans 268–325 (GGAGRPGGAGRPGGGPGRPGGAPGAGTGGGAPAGGGFGKGGRGRGGTQGAFGKGGAGR). The span at 326-335 (GKQRKSKRAK) shows a compositional bias: basic residues. The 172-residue stretch at 450–621 (ARAPVVTVMG…AVLLTADAAL (172 aa)) folds into the tr-type G domain. The G1 stretch occupies residues 459–466 (GHVDHGKT). 459 to 466 (GHVDHGKT) lines the GTP pocket. A G2 region spans residues 484–488 (GITQH). The segment at 509 to 512 (DTPG) is G3. Residues 509–513 (DTPGH) and 563–566 (NKID) contribute to the GTP site. The G4 stretch occupies residues 563–566 (NKID). The interval 599 to 601 (SAR) is G5.

This sequence belongs to the TRAFAC class translation factor GTPase superfamily. Classic translation factor GTPase family. IF-2 subfamily.

Its subcellular location is the cytoplasm. One of the essential components for the initiation of protein synthesis. Protects formylmethionyl-tRNA from spontaneous hydrolysis and promotes its binding to the 30S ribosomal subunits. Also involved in the hydrolysis of GTP during the formation of the 70S ribosomal complex. The protein is Translation initiation factor IF-2 of Paenarthrobacter aurescens (strain TC1).